The sequence spans 774 residues: Armadillo-like helical domain-containing protein 4 (774 aa).

A signal peptide spans 1–27 (MRGPIVLHICLAFCSLLLFSVATQCLA). Residues 28–714 (FPKIERRREI…KDKAGYMSGM (687 aa)) are Extracellular-facing. The span at 41 to 52 (HAEKGQSDKMNT) shows a compositional bias: basic and acidic residues. Disordered stretches follow at residues 41-63 (HAEK…VTSK) and 97-135 (QPGQ…ERIS). A glycan (N-linked (GlcNAc...) asparagine) is linked at Asn-57. N-linked (GlcNAc...) asparagine glycosylation is present at Asn-189. The segment covering 221-233 (KTEKFEADTDHRT) has biased composition (basic and acidic residues). Disordered stretches follow at residues 221-275 (KTEK…QPLE) and 600-669 (ASYG…PGLE). A compositionally biased stretch (polar residues) spans 258–275 (SQMTADNTQAAATKQPLE). Positions 607 to 651 (LESEEGQEDEDEEDEEDEDEEEEDEEEDEEDKDADSLDEGLDGDT) are enriched in acidic residues. A helical transmembrane segment spans residues 715–735 (LVPVGVGIAGALFILGALYSI). Residues 736–774 (KVMNRRRRNGFKRHKRKQREFNSMQDRVMLLADSSEDEF) are Cytoplasmic-facing. Phosphoserine occurs at positions 769 and 770.

In terms of assembly, interacts with IL6ST; this interaction prevents IL6ST protein homodimerization and bridges ARMH4 with IL6R and STAT3 and therefore inhibits phosphorylation of STAT3 at 'Tyr-705'. Interacts (via cytoplasmic tail) with RICTOR; this interaction bridges ARMH4 to the mTORC2 complex and inhibits the mTORC2 kinase activity. In terms of tissue distribution, expressed in podocytes.

It localises to the membrane. Its function is as follows. May modulate immune response and may play a role in inflammation. Down-modulates STAT3 signaling throught direct interaction with IL6ST, resulting in the inhibition of phosphorylation of STAT3 at 'Tyr-705'. May negatively regulates AKT signaling by modulating the activity of mTORC2 complex through RICTOR interaction. In Homo sapiens (Human), this protein is Armadillo-like helical domain-containing protein 4.